We begin with the raw amino-acid sequence, 181 residues long: Lectin beta-1 and beta-2 chains (181 aa).

Mn(2+) is bound by residues glutamate 119 and aspartate 121. The Ca(2+) site is built by aspartate 121, phenylalanine 123, asparagine 125, and aspartate 129. Residues aspartate 129 and histidine 136 each contribute to the Mn(2+) site.

This sequence belongs to the leguminous lectin family. Tetramer of two alpha and two beta chains.

This Lathyrus ochrus (Cyprus-vetch) protein is Lectin beta-1 and beta-2 chains.